The sequence spans 723 residues: Zinc finger CCCH domain-containing protein 11A (723 aa).

3 C3H1-type zinc fingers span residues 2–29 (SKQG…HCEA), 31–57 (LGNE…HMEI), and 60–87 (KRSE…HTKG). 5 disordered regions span residues 142–208 (ENSE…KQDD), 223–256 (KKQK…EKEN), 404–428 (KRAE…KLEE), 450–526 (EKAL…VKSL), and 565–681 (VKPS…APLS). Residues 160 to 175 (ADDDEDDDDQLSEEGE) are compositionally biased toward acidic residues. Residues 376-411 (KTFSEALAERKQRRLEEEKQKLEEFLTEKRAEGERK) adopt a coiled-coil conformation. Residues 511–522 (PSNQSAPNSKAQ) are compositionally biased toward polar residues. Over residues 609–620 (KKAALTAAPALP) the composition is skewed to low complexity. The segment covering 637–649 (LELQLGSQADSVE) has biased composition (polar residues). The segment covering 650 to 672 (QSGDSSSASASSQSVAKAQQLSS) has biased composition (low complexity).

It localises to the nucleus speckle. In terms of biological role, through its association with TREX complex components, may participate in the export and post-transcriptional coordination of selected mRNA transcripts. Binds RNA. The protein is Zinc finger CCCH domain-containing protein 11A (ZC3H11A) of Gallus gallus (Chicken).